Here is a 485-residue protein sequence, read N- to C-terminus: MTITPQQLIALLPLLIVGLTVVVVMLSIAWRRDHFINTTLTVIGLNLALLSLYFVGQQEAMDVTPLVHVDRYAMLYIGLVLVASLATATFAYSWLENYPDNKEEFYLLVLIATVGGILLACANHLASLFIGIELLTLPLFGLIGYAYRQKRSLEAAIKYMLLSAAASSFMLFGIALLYAESGDLSFAALGHRLSDSYIYQPLILSGLGMLVVGLGFKLSLVPFHLWTPDVYQGAPAPVSTFLATASKIAIFAVVIRLFVEAPMADSEALRTVLTVIAIASMLFGNLMALTQTNIKRLLGYSSIAHLGYLLVALVAVQNHQLSEETVGIYLAGYLFSSIGAFGVVSLMSSPYKGPDADSLYSYRGLFWHKPILSAVMTVMMLSLAGIPMTFGFIGKFYVIVLGVKAELWWLTGAVVVGSAIGLYYYLRVMVSLYLPAPKALNRDTPRNWASTAGGMVVLISALLVLALGIWPQPLIDVIQQAKIIL.

A run of 14 helical transmembrane segments spans residues 8 to 28, 35 to 55, 75 to 95, 104 to 124, 125 to 145, 159 to 179, 203 to 223, 235 to 255, 271 to 291, 297 to 317, 326 to 346, 383 to 403, 406 to 426, and 455 to 475; these read LIAL…MLSI, FINT…LYFV, LYIG…YSWL, EFYL…CANH, LASL…LIGY, YMLL…LLYA, ILSG…LVPF, PAPV…AVVI, TVLT…ALTQ, LLGY…VAVQ, VGIY…VVSL, LAGI…VLGV, ELWW…YYYL, and MVVL…QPLI.

The protein belongs to the complex I subunit 2 family. NDH-1 is composed of 13 different subunits. Subunits NuoA, H, J, K, L, M, N constitute the membrane sector of the complex.

It is found in the cell inner membrane. It catalyses the reaction a quinone + NADH + 5 H(+)(in) = a quinol + NAD(+) + 4 H(+)(out). In terms of biological role, NDH-1 shuttles electrons from NADH, via FMN and iron-sulfur (Fe-S) centers, to quinones in the respiratory chain. The immediate electron acceptor for the enzyme in this species is believed to be ubiquinone. Couples the redox reaction to proton translocation (for every two electrons transferred, four hydrogen ions are translocated across the cytoplasmic membrane), and thus conserves the redox energy in a proton gradient. The protein is NADH-quinone oxidoreductase subunit N of Photorhabdus laumondii subsp. laumondii (strain DSM 15139 / CIP 105565 / TT01) (Photorhabdus luminescens subsp. laumondii).